The following is a 639-amino-acid chain: RNA polymerase II elongation factor ELL2 (639 aa).

Disordered stretches follow at residues 175–203 (DTVP…SVSQ), 291–326 (LNPS…SDFI), 378–416 (PSTH…SFSQ), and 439–513 (PSSA…EGCT). Over residues 291 to 317 (LNPSQNASTSRSESPLCSSKDAASSPQ) the composition is skewed to polar residues. Over residues 378 to 401 (PSTHLPVSNPPQTVNSNSNSPSTP) the composition is skewed to low complexity. Positions 457–469 (SHKKSKKKSKKHK) are enriched in basic residues. Positions 470–479 (EKDQIKKLDI) are enriched in basic and acidic residues. Over residues 480 to 490 (ETMEEKEEDLQ) the composition is skewed to acidic residues. Phosphoserine is present on residues Ser501 and Ser579. Residues 525–635 (PDYLIKYIAI…LIGEFDQQQA (111 aa)) enclose the OCEL domain.

This sequence belongs to the ELL/occludin family. In terms of assembly, component of the super elongation complex (SEC), at least composed of EAF1, EAF2, CDK9, MLLT3/AF9, AFF (AFF1 or AFF4), the P-TEFb complex and ELL (ELL, ELL2 or ELL3). Component of the little elongation complex (LEC), at least composed of ELL (ELL, ELL2 or ELL3), ZC3H8, ICE1 and ICE2. Interacts with AFF4; the interaction is direct and leads to stabilize ELL2 and prevent ELL2 ubiquitination. Interacts with EAF1 and EAF2. Ubiquitinated by SIAH1, leading to its degradation by the proteasome. Interaction with AFF4 stabilizes ELL2 and prevents ELL2 ubiquitination.

The protein resides in the nucleus. Its function is as follows. Elongation factor component of the super elongation complex (SEC), a complex required to increase the catalytic rate of RNA polymerase II transcription by suppressing transient pausing by the polymerase at multiple sites along the DNA. Component of the little elongation complex (LEC), a complex required to regulate small nuclear RNA (snRNA) gene transcription by RNA polymerase II and III. Plays a role in immunoglobulin secretion in plasma cells: directs efficient alternative mRNA processing, influencing both proximal poly(A) site choice and exon skipping, as well as immunoglobulin heavy chain (IgH) alternative processing. Probably acts by regulating histone modifications accompanying transition from membrane-specific to secretory IgH mRNA expression. The sequence is that of RNA polymerase II elongation factor ELL2 (Ell2) from Mus musculus (Mouse).